Consider the following 282-residue polypeptide: Bacterial lipoprotein FTN_1103 (282 aa).

The first 28 residues, 1 to 28, serve as a signal peptide directing secretion; the sequence is MKYGNLMMTKKKLLIGMVTISGIVILGS. Cys-29 carries the N-palmitoyl cysteine lipid modification. Cys-29 carries the S-diacylglycerol cysteine lipid modification.

The protein localises to the cell membrane. In terms of biological role, stimulates the host immune inflammatory signaling system allowing the host to combat the bacteria. Stimulates mouse interleukin-6 (Il6) production. The sequence is that of Bacterial lipoprotein FTN_1103 from Francisella tularensis subsp. novicida (strain U112).